Here is a 75-residue protein sequence, read N- to C-terminus: MSKLKITYRKSAIGYSHDQKATIRSLGLRRLNSVVVHDDTPTIRGMIFKVRHLVSVEELPDRDAPADHPGDDMKR.

This sequence belongs to the universal ribosomal protein uL30 family. In terms of assembly, part of the 50S ribosomal subunit.

The polypeptide is Large ribosomal subunit protein uL30 (Roseiflexus castenholzii (strain DSM 13941 / HLO8)).